The primary structure comprises 137 residues: Large ribosomal subunit protein uL16 (137 aa).

The protein belongs to the universal ribosomal protein uL16 family. As to quaternary structure, part of the 50S ribosomal subunit.

Binds 23S rRNA and is also seen to make contacts with the A and possibly P site tRNAs. In Streptococcus agalactiae serotype Ia (strain ATCC 27591 / A909 / CDC SS700), this protein is Large ribosomal subunit protein uL16.